Here is an 87-residue protein sequence, read N- to C-terminus: Small ribosomal subunit protein bS20 (87 aa).

The interval 1-25 is disordered; sequence MANIKSAKKRAVQSEKRRKHNASRR.

The protein belongs to the bacterial ribosomal protein bS20 family.

Its function is as follows. Binds directly to 16S ribosomal RNA. The chain is Small ribosomal subunit protein bS20 from Yersinia pseudotuberculosis serotype O:1b (strain IP 31758).